The following is a 303-amino-acid chain: Aspartate carbamoyltransferase catalytic subunit (303 aa).

Carbamoyl phosphate contacts are provided by Arg-51 and Thr-52. L-aspartate is bound at residue Lys-80. Positions 101, 129, and 132 each coordinate carbamoyl phosphate. Positions 162 and 221 each coordinate L-aspartate. The carbamoyl phosphate site is built by Leu-260 and Pro-261.

It belongs to the aspartate/ornithine carbamoyltransferase superfamily. ATCase family. In terms of assembly, heterooligomer of catalytic and regulatory chains.

It carries out the reaction carbamoyl phosphate + L-aspartate = N-carbamoyl-L-aspartate + phosphate + H(+). Its pathway is pyrimidine metabolism; UMP biosynthesis via de novo pathway; (S)-dihydroorotate from bicarbonate: step 2/3. In terms of biological role, catalyzes the condensation of carbamoyl phosphate and aspartate to form carbamoyl aspartate and inorganic phosphate, the committed step in the de novo pyrimidine nucleotide biosynthesis pathway. This is Aspartate carbamoyltransferase catalytic subunit from Saccharolobus islandicus (strain M.16.27) (Sulfolobus islandicus).